The following is a 258-amino-acid chain: Imidazole glycerol phosphate synthase subunit HisF (258 aa).

Catalysis depends on residues Asp-11 and Asp-130.

It belongs to the HisA/HisF family. As to quaternary structure, heterodimer of HisH and HisF.

The protein resides in the cytoplasm. The enzyme catalyses 5-[(5-phospho-1-deoxy-D-ribulos-1-ylimino)methylamino]-1-(5-phospho-beta-D-ribosyl)imidazole-4-carboxamide + L-glutamine = D-erythro-1-(imidazol-4-yl)glycerol 3-phosphate + 5-amino-1-(5-phospho-beta-D-ribosyl)imidazole-4-carboxamide + L-glutamate + H(+). The protein operates within amino-acid biosynthesis; L-histidine biosynthesis; L-histidine from 5-phospho-alpha-D-ribose 1-diphosphate: step 5/9. In terms of biological role, IGPS catalyzes the conversion of PRFAR and glutamine to IGP, AICAR and glutamate. The HisF subunit catalyzes the cyclization activity that produces IGP and AICAR from PRFAR using the ammonia provided by the HisH subunit. This is Imidazole glycerol phosphate synthase subunit HisF from Shigella boydii serotype 18 (strain CDC 3083-94 / BS512).